Consider the following 65-residue polypeptide: Conotoxin Bu19 (65 aa).

Residues 1-21 form the signal peptide; it reads MGMRMVFTVFLLVVLATTVVS. The propeptide occupies 22-48; that stretch reads FTSDRASDGRNAAANDKASDLAALAVR. Disulfide bonds link Cys-50–Cys-56 and Cys-51–Cys-64. Position 64 is a cysteine amide (Cys-64).

This sequence belongs to the conotoxin A superfamily. As to expression, expressed by the venom duct.

It is found in the secreted. This is Conotoxin Bu19 from Conus bullatus (Bubble cone).